A 466-amino-acid polypeptide reads, in one-letter code: Vacuolar-processing enzyme delta-isozyme (466 aa).

The N-terminal stretch at 1–24 (MSSPLGHFQILVFLHALLIFSAES) is a signal peptide. A glycan (N-linked (GlcNAc...) asparagine) is linked at Asn137. His164 is a catalytic residue. Catalysis depends on Cys206, which acts as the Nucleophile. Cys239 and Cys253 are joined by a disulfide. Asn322 carries N-linked (GlcNAc...) asparagine glycosylation. Intrachain disulfides connect Cys417-Cys447 and Cys429-Cys464.

This sequence belongs to the peptidase C13 family. In terms of processing, auto-catalytic activation. In terms of tissue distribution, seed specific. Restricted to developing seeds at 7 days after anthesis, and, at lower levels, detected in flowers. Detected in siliques, specifically in seed coats (at protein level).

It is found in the secreted. The protein resides in the extracellular space. The protein localises to the cell wall. Its subcellular location is the vacuole. It carries out the reaction Hydrolysis of proteins and small molecule substrates at -Asn-|-Xaa- bonds.. Strongly inhibited by biotin-YVAD-fmk (a caspase-1 inhibitor) and by Ac-DEVD-fmk. Functionally, asparagine-specific endopeptidase that may be involved in processing of proteins targeted to vacuoles. Probably involved in post-translational proteolysis of seed storage proteins in the protein storage vacuole of developing seeds. Exhibits a caspase-1-like activity in extracellular granules. At the early stage of seed development, required for the formation of the seed coat, by regulating cell death of specific cell layers in inner integument. The sequence is that of Vacuolar-processing enzyme delta-isozyme from Arabidopsis thaliana (Mouse-ear cress).